Consider the following 602-residue polypeptide: uncharacterized protein (602 aa).

The region spanning 271-472 (IIDILADILI…RDEEVAKYIF (202 aa)) is the MCM domain. 315-322 (TEVGIDKT) is an ATP binding site.

The protein belongs to the MCM family.

This is an uncharacterized protein from Methanocaldococcus jannaschii (strain ATCC 43067 / DSM 2661 / JAL-1 / JCM 10045 / NBRC 100440) (Methanococcus jannaschii).